The following is a 351-amino-acid chain: Dysbindin (351 aa).

Ser-11 is modified (phosphoserine). The stretch at 88–181 forms a coiled coil; the sequence is EKKKTSLVEL…ELDAEHAQKV (94 aa). The segment at 173 to 331 is dysbindin; the sequence is LDAEHAQKVL…DEEEVQVDTA (159 aa). A Nuclear export signal motif is present at residues 243-256; that stretch reads LMDISDQEALDVFL. The disordered stretch occupies residues 286-351; that stretch reads PNPSELRAKP…TPDGGEDSDS (66 aa). Over residues 296–305 the composition is skewed to polar residues; the sequence is PSSSSTCTDS. Ser-316, Ser-321, and Ser-349 each carry phosphoserine.

It belongs to the dysbindin family. Interacts (via its coiled coil domain) with KXD1. Interacts with CMYA5, PI4K2 and RNF151. Component of the biogenesis of lysosome-related organelles complex 1 (BLOC-1) composed of at least BLOC1S1, BLOC1S2, BLOC1S3, BLOC1S4, BLOC1S5, BLOC1S6, DTNBP1/BLOC1S7 and SNAPIN/BLOC1S8. Interacts directly in the complex with BLOC1S5, BLOC1S6 and SNAPIN/BLOC1S8. The BLOC-1 complex associates with the AP-3 protein complex and membrane protein cargos. This BLOC-1 complex also associates with the BLOC-2 complex in endosomes. Binds to DTNA and DTNB but may not be a physiological binding partner. Interacts (isoform 1 and isoform 2 only) with the DNA-dependent protein kinase complex DNA-PK; the interaction phosphorylates DTNBP1 in vitro. Interacts directly in this complex with XRCC5 and XRCC6. Interacts with AP3M1, AP3B2 and TRIM32. Interacts with XPO1; the interaction exports DTNBP1 out of the nucleus. In terms of processing, ubiquitinated by TRIM32. Ubiquitination leads to DTNBP1 degradation. Isoforms 1 and 2 highly phosphorylated by PRKDC in vitro. Isoform 3 only weakly phosphorylated by PRKDC in vitro. Detected in brain, in neurons and in neuropil. Isoform 1 is expressed in the cerebral cortex, and hippocampal frontal (HF). Specific expression in the posterior half of the superior temporal gyrus (pSTG). Higher expression of isoform 2 and 3 in the HF than in the pSTG while isoform 1 shows no difference in expression in these areas. In the HF, detected in dentate gyrus (DG) and in pyramidal cells of hippocampus CA2 and CA3 (at protein level). Expressed in all principal neuronal populations of the HF, namely pyramidal neurons in the subiculum and CA1-3, granule cells in the dense cell layer of the DG (DGg), and polymorph cells in the hilus of the DG (DGh). Maximal levels in CA2, CA3, and DGh. Isoform 2 not expressed in the cerebral cortex.

It localises to the cytoplasm. The protein resides in the cytoplasmic vesicle membrane. It is found in the endosome membrane. Its subcellular location is the melanosome membrane. The protein localises to the postsynaptic density. It localises to the endoplasmic reticulum. The protein resides in the nucleus. It is found in the cytoplasmic vesicle. Its subcellular location is the secretory vesicle. The protein localises to the synaptic vesicle membrane. It localises to the postsynaptic cell membrane. Component of the BLOC-1 complex, a complex that is required for normal biogenesis of lysosome-related organelles (LRO), such as platelet dense granules and melanosomes. In concert with the AP-3 complex, the BLOC-1 complex is required to target membrane protein cargos into vesicles assembled at cell bodies for delivery into neurites and nerve terminals. The BLOC-1 complex, in association with SNARE proteins, is also proposed to be involved in neurite extension. Associates with the BLOC-2 complex to facilitate the transport of TYRP1 independent of AP-3 function. Plays a role in synaptic vesicle trafficking and in neurotransmitter release. Plays a role in the regulation of cell surface exposure of DRD2. May play a role in actin cytoskeleton reorganization and neurite outgrowth. May modulate MAPK8 phosphorylation. Appears to promote neuronal transmission and viability through regulating the expression of SNAP25 and SYN1, modulating PI3-kinase-Akt signaling and influencing glutamatergic release. Regulates the expression of SYN1 through binding to its promoter. Modulates prefrontal cortical activity via the dopamine/D2 pathway. This chain is Dysbindin (DTNBP1), found in Homo sapiens (Human).